A 433-amino-acid polypeptide reads, in one-letter code: GTPase Obg (433 aa).

An Obg domain is found at 4–162; that stretch reads EDFVDRVTIF…RWLELELKLL (159 aa). Residues 163-334 form the OBG-type G domain; the sequence is ADAGLIGFPN…LKQKIFEIVG (172 aa). Residues 169–176, 194–198, 216–219, 286–289, and 315–317 contribute to the GTP site; these read GFPNVGKS, FTTLV, DIPG, NKID, and SAL. Residues Ser176 and Thr196 each coordinate Mg(2+). Positions 356-433 constitute an OCT domain; the sequence is TKIEERFDFE…IGQYSFEYKE (78 aa).

This sequence belongs to the TRAFAC class OBG-HflX-like GTPase superfamily. OBG GTPase family. Monomer. Mg(2+) is required as a cofactor.

The protein resides in the cytoplasm. An essential GTPase which binds GTP, GDP and possibly (p)ppGpp with moderate affinity, with high nucleotide exchange rates and a fairly low GTP hydrolysis rate. Plays a role in control of the cell cycle, stress response, ribosome biogenesis and in those bacteria that undergo differentiation, in morphogenesis control. The chain is GTPase Obg from Pseudothermotoga lettingae (strain ATCC BAA-301 / DSM 14385 / NBRC 107922 / TMO) (Thermotoga lettingae).